The sequence spans 420 residues: MQYALLGLGLSNKYAAKFLLKLGEKIFVSESGKLSSEDKAFLEENNIPYEEGVNSEKILEADVILTSPSVPHNHPILLKAQQMGKYVDTEITYFMKFLDWKPKIIAVTGSVGKSTTVAMINHLISKSASSQISGNFGIPIAQVLLEGKKPEYIVVEISSFQLYWTPFFKPNVAVITNIYPNHLDWHPSMEHYVDSKFKITKFQDNEDHFVYNPKDMETFKRLALVQAKRVPFTVDFKFEEIPFHIRTKQNMENIAAAKTVLKVLGLPFSMSMLEDFTPLPHRMEYCGTINGAHYYNDSKATNAAAVVKALENFDNNLYLIIAGKGKNEDYSKLANEISKKCKFVAIVGPISDAVEPYLKERNVNYKRFSNIEEAVFEISKMAKEGDYVLLGPAGASYDAYKNFEERGNHFKEIVKKLMQG.

109–115 (GSVGKST) lines the ATP pocket.

It belongs to the MurCDEF family.

The protein resides in the cytoplasm. The catalysed reaction is UDP-N-acetyl-alpha-D-muramoyl-L-alanine + D-glutamate + ATP = UDP-N-acetyl-alpha-D-muramoyl-L-alanyl-D-glutamate + ADP + phosphate + H(+). It participates in cell wall biogenesis; peptidoglycan biosynthesis. Its function is as follows. Cell wall formation. Catalyzes the addition of glutamate to the nucleotide precursor UDP-N-acetylmuramoyl-L-alanine (UMA). The sequence is that of UDP-N-acetylmuramoylalanine--D-glutamate ligase from Fervidobacterium nodosum (strain ATCC 35602 / DSM 5306 / Rt17-B1).